Here is a 283-residue protein sequence, read N- to C-terminus: Prepilin leader peptidase/N-methyltransferase (283 aa).

The next 7 membrane-spanning stretches (helical) occupy residues 13–33 (VWLL…NVVI), 106–126 (WRYP…GLLW), 128–148 (PGLA…LAAI), 153–173 (QLLP…FNLA), 176–196 (FVPL…LWLI), 216–236 (LLAA…VLIA), and 259–279 (LAFG…NVLG).

This sequence belongs to the peptidase A24 family.

The protein localises to the cell inner membrane. The catalysed reaction is Typically cleaves a -Gly-|-Phe- bond to release an N-terminal, basic peptide of 5-8 residues from type IV prepilin, and then N-methylates the new N-terminal amino group, the methyl donor being S-adenosyl-L-methionine.. In terms of biological role, plays a role in type II pseudopili formation by proteolytically removing the leader sequence from substrate proteins and subsequently monomethylating the alpha-amino group of the newly exposed N-terminal phenylalanine. Substrates include proteins required for biogenesis of the type II general secretory apparatus. In Dickeya chrysanthemi (Pectobacterium chrysanthemi), this protein is Prepilin leader peptidase/N-methyltransferase (outO).